A 354-amino-acid polypeptide reads, in one-letter code: Heme A synthase (354 aa).

8 helical membrane passes run 21 to 41, 106 to 126, 139 to 159, 171 to 191, 212 to 232, 268 to 288, 304 to 324, and 326 to 346; these read VAVW…LGGL, VWGR…ALSG, VFLL…SGLV, AHLA…LDIL, MLGL…VAGL, VQFG…VGWF, AVGL…VMVV, and VWLA…CLWA. Histidine 272 serves as a coordination point for heme. Histidine 332 provides a ligand contact to heme.

The protein belongs to the COX15/CtaA family. Type 2 subfamily. As to quaternary structure, interacts with CtaB. It depends on heme b as a cofactor.

Its subcellular location is the cell membrane. The enzyme catalyses Fe(II)-heme o + 2 A + H2O = Fe(II)-heme a + 2 AH2. It functions in the pathway porphyrin-containing compound metabolism; heme A biosynthesis; heme A from heme O: step 1/1. Catalyzes the conversion of heme O to heme A by two successive hydroxylations of the methyl group at C8. The first hydroxylation forms heme I, the second hydroxylation results in an unstable dihydroxymethyl group, which spontaneously dehydrates, resulting in the formyl group of heme A. This is Heme A synthase from Paramagnetospirillum magneticum (strain ATCC 700264 / AMB-1) (Magnetospirillum magneticum).